A 385-amino-acid chain; its full sequence is Flap endonuclease 1 (385 aa).

The tract at residues 1 to 105 (MGIKGLNAII…HELSKRSARR (105 aa)) is N-domain. Residue Asp-34 participates in Mg(2+) binding. 2 residues coordinate DNA: Arg-47 and Arg-71. Residues Asp-87, Glu-156, Glu-158, Asp-177, and Asp-179 each contribute to the Mg(2+) site. The interval 120–251 (EKLKHERRLV…VTALKLIKEH (132 aa)) is I-domain. DNA is bound at residue Glu-156. The DNA site is built by Gly-229 and Asp-231. Residue Asp-231 participates in Mg(2+) binding. The interaction with PCNA stretch occupies residues 338–346 (VQGRLDGFF). Positions 356 to 370 (LAAANAKAKSTKAGK) are enriched in low complexity. The disordered stretch occupies residues 356 to 385 (LAAANAKAKSTKAGKQATKGKVGKPGRPRK). Positions 376–385 (KVGKPGRPRK) are enriched in basic residues.

The protein belongs to the XPG/RAD2 endonuclease family. FEN1 subfamily. In terms of assembly, interacts with PCNA. Three molecules of FEN1 bind to one PCNA trimer with each molecule binding to one PCNA monomer. PCNA stimulates the nuclease activity without altering cleavage specificity. Mg(2+) is required as a cofactor. In terms of processing, phosphorylated. Phosphorylation upon DNA damage induces relocalization to the nuclear plasma.

It localises to the nucleus. Its subcellular location is the nucleolus. It is found in the nucleoplasm. The protein localises to the mitochondrion. In terms of biological role, structure-specific nuclease with 5'-flap endonuclease and 5'-3' exonuclease activities involved in DNA replication and repair. During DNA replication, cleaves the 5'-overhanging flap structure that is generated by displacement synthesis when DNA polymerase encounters the 5'-end of a downstream Okazaki fragment. It enters the flap from the 5'-end and then tracks to cleave the flap base, leaving a nick for ligation. Also involved in the long patch base excision repair (LP-BER) pathway, by cleaving within the apurinic/apyrimidinic (AP) site-terminated flap. Acts as a genome stabilization factor that prevents flaps from equilibrating into structures that lead to duplications and deletions. Also possesses 5'-3' exonuclease activity on nicked or gapped double-stranded DNA, and exhibits RNase H activity. Also involved in replication and repair of rDNA and in repairing mitochondrial DNA. This is Flap endonuclease 1 from Lachancea thermotolerans (strain ATCC 56472 / CBS 6340 / NRRL Y-8284) (Yeast).